The sequence spans 36 residues: Pancreatic polypeptide (36 aa).

The residue at position 36 (Tyr36) is a Tyrosine amide.

The protein belongs to the NPY family.

It localises to the secreted. Functionally, hormone secreted by pancreatic cells that acts as a regulator of pancreatic and gastrointestinal functions probably by signaling through the G protein-coupled receptor NPY4R2. This chain is Pancreatic polypeptide (PPY), found in Erinaceus europaeus (Western European hedgehog).